Consider the following 114-residue polypeptide: Ig heavy chain V region (114 aa).

An Ig-like domain is found at 1 to 106 (EVQLQQSGAE…AVRVISRYFD (106 aa)).

This is Ig heavy chain V region from Mus musculus (Mouse).